The chain runs to 88 residues: Augerpeptide Hhe9a (88 aa).

The N-terminal stretch at 1–21 (MMTKTGLVLLFAFLLVFPVSS) is a signal peptide. Positions 22 to 49 (LPMDAEAGHARLEMDKRDAGNEAWTRLL) are excised as a propeptide. 3 cysteine pairs are disulfide-bonded: Cys56–Cys71, Cys61–Cys73, and Cys67–Cys86.

Expressed by the venom duct.

Its subcellular location is the secreted. In Hastula hectica (Sea snail), this protein is Augerpeptide Hhe9a.